The following is a 202-amino-acid chain: Transcriptional regulator SdrP (202 aa).

An HTH crp-type domain is found at 117–189 (QRLKNRMAAA…YGKIQLLDLK (73 aa)). A DNA-binding region (H-T-H motif) is located at residues 149-168 (HDELAAAVGSVRETVTKVIG).

In terms of assembly, homodimer.

Activates transcription. The consensus DNA-binding site of this transcriptional regulator is 5'-WWGTGAN(5-7)ACACWW-3' in which W is A or T and N is G, A, T or C. Regulated genes include those encoding proteins involved in nutrient and energy supply, redox control and polyadenylation of mRNA. Also regulates genes involved in oxidative stress response such as genes encoding manganese superoxide dismutase and catalase, and genes encoding a protein involved in nucleotide excision repair of damaged DNA and putative proteins involved in redox control, protein degradation and transcriptional regulation. The polypeptide is Transcriptional regulator SdrP (Thermus thermophilus (strain ATCC 27634 / DSM 579 / HB8)).